Consider the following 150-residue polypeptide: Ribosome maturation factor RimP (150 aa).

Belongs to the RimP family.

It localises to the cytoplasm. Required for maturation of 30S ribosomal subunits. The protein is Ribosome maturation factor RimP of Hahella chejuensis (strain KCTC 2396).